The chain runs to 146 residues: Cytochrome c-type biogenesis protein CcmE (146 aa).

Residues M1 to R7 lie on the Cytoplasmic side of the membrane. The chain crosses the membrane as a helical; Signal-anchor for type II membrane protein span at residues L8 to A28. The Periplasmic portion of the chain corresponds to F29–K146. Residues H123 and Y127 each coordinate heme.

Belongs to the CcmE/CycJ family.

It is found in the cell inner membrane. Heme chaperone required for the biogenesis of c-type cytochromes. Transiently binds heme delivered by CcmC and transfers the heme to apo-cytochromes in a process facilitated by CcmF and CcmH. The sequence is that of Cytochrome c-type biogenesis protein CcmE from Zymomonas mobilis subsp. mobilis (strain ATCC 31821 / ZM4 / CP4).